The sequence spans 798 residues: Phenylalanine--tRNA ligase beta subunit (798 aa).

The 111-residue stretch at 38–148 (IGNYEKVVVG…PEAPVGEKIE (111 aa)) folds into the tRNA-binding domain. One can recognise a B5 domain in the interval 400–475 (FTPKVIAVSL…RYLGYNNFPD (76 aa)). Residues aspartate 453, aspartate 459, glutamate 462, and glutamate 463 each contribute to the Mg(2+) site. Positions 703–796 (SPYPEVKRDI…LEAKTGAKLR (94 aa)) constitute an FDX-ACB domain.

The protein belongs to the phenylalanyl-tRNA synthetase beta subunit family. Type 1 subfamily. As to quaternary structure, tetramer of two alpha and two beta subunits. Mg(2+) serves as cofactor.

The protein localises to the cytoplasm. It catalyses the reaction tRNA(Phe) + L-phenylalanine + ATP = L-phenylalanyl-tRNA(Phe) + AMP + diphosphate + H(+). The polypeptide is Phenylalanine--tRNA ligase beta subunit (Carboxydothermus hydrogenoformans (strain ATCC BAA-161 / DSM 6008 / Z-2901)).